A 133-amino-acid polypeptide reads, in one-letter code: Small ribosomal subunit protein uS8 (133 aa).

Belongs to the universal ribosomal protein uS8 family. In terms of assembly, part of the 30S ribosomal subunit. Contacts proteins S5 and S12.

One of the primary rRNA binding proteins, it binds directly to 16S rRNA central domain where it helps coordinate assembly of the platform of the 30S subunit. The protein is Small ribosomal subunit protein uS8 of Synechococcus elongatus (strain ATCC 33912 / PCC 7942 / FACHB-805) (Anacystis nidulans R2).